Here is an 827-residue protein sequence, read N- to C-terminus: Transcription factor SOX-6 (827 aa).

Residues 1-10 (MSSKQATSPF) show a composition bias toward polar residues. Residues 1-51 (MSSKQATSPFACTVDGEETMTQDLTSREKEEGSDQHPASHLPLHPIMHNKP) are disordered. Positions 25–34 (TSREKEEGSD) are enriched in basic and acidic residues. Thr119 carries the phosphothreonine modification. Positions 184–257 (LAEKERQLST…QHKINLLQQQ (74 aa)) form a coiled coil. 2 disordered regions span residues 329–360 (HVSH…GGHS) and 380–470 (SPGA…PIGG). Residues 341 to 357 (GISDRLGRNLDPYEHGG) are compositionally biased toward basic and acidic residues. Position 399 is a phosphoserine (Ser399). Thr401 is subject to Phosphothreonine. Residues Lys404 and Lys417 each participate in a glycyl lysine isopeptide (Lys-Gly) (interchain with G-Cter in SUMO) cross-link. 2 stretches are compositionally biased toward polar residues: residues 421-431 (TAQPLNLSSRP) and 439-461 (SPTS…LPNK). Residues Ser439 and Ser442 each carry the phosphoserine modification. Residues 620–688 (IKRPMNAFMV…IHLEKYPNYK (69 aa)) constitute a DNA-binding region (HMG box). Disordered regions lie at residues 752–772 (TPSP…EPSL) and 786–827 (ASLA…VSAN). Over residues 795–808 (NGEDEMEAYDDYED) the composition is skewed to acidic residues.

As to quaternary structure, homodimer. Interacts with DAZAP2. May interact with CENPK. Post-translationally, sumoylation inhibits the transcriptional activity.

The protein resides in the nucleus. It localises to the cytoplasm. Transcription factor that plays a key role in several developmental processes, including neurogenesis, chondrocytes differentiation and cartilage formation. Specifically binds the 5'-AACAAT-3' DNA motif present in enhancers and super-enhancers and promotes expression of genes important for chondrogenesis. Required for overt chondrogenesis when condensed prechondrocytes differentiate into early stage chondrocytes: SOX5 and SOX6 cooperatively bind with SOX9 on active enhancers and super-enhancers associated with cartilage-specific genes, and thereby potentiate SOX9's ability to transactivate. Not involved in precartilaginous condensation, the first step in chondrogenesis, during which skeletal progenitors differentiate into prechondrocytes. Together with SOX5, required to form and maintain a pool of highly proliferating chondroblasts between epiphyses and metaphyses, to form columnar chondroblasts, delay chondrocyte prehypertrophy but promote hypertrophy, and to delay terminal differentiation of chondrocytes on contact with ossification fronts. Binds to the proximal promoter region of the myelin protein MPZ gene, and is thereby involved in the differentiation of oligodendroglia in the developing spinal tube. Binds to the gene promoter of MBP and acts as a transcriptional repressor. This Rattus norvegicus (Rat) protein is Transcription factor SOX-6.